The sequence spans 407 residues: MGFVLPASFPGASSITTGGSCLRSKQYAKNYYASSYVTTLWHKKGKIQKEYCAVIFSRHNLKQHYKVNEGGSTSKECEKKYVVNAISEQSFEYEPQARDPKNIWGSVNDALDTFYKFCRPYAIFSVVLGATFKSLVAVERLSDLSLAFFIGWLQVVVAVICIHIFDVGLNQLCDIEIDKINKPDLPLASGNLSFRNVVIITASSLILGLGFAWIVGSWPLFWTVFICCMFAAAYNVDLPLLRWKKYPVLTAISFIANVAVTRSLGFFLHMQTCVFKRPTTFPRPLIFCTAIVSIYAIVIALFKDIPDMEGDEKFGIQSLSLRLGPKRVFWICVSLLEMAYGVTILVGATSPILWSKIITVLGHAILASVLWYHAKSTDLTSNVVLQSFYMFIWKLHTAEYCLIPLFR.

The transit peptide at 1-23 directs the protein to the chloroplast; it reads MGFVLPASFPGASSITTGGSCLR. The next 8 membrane-spanning stretches (helical) occupy residues 117 to 137, 145 to 165, 206 to 226, 248 to 268, 285 to 305, 328 to 348, 352 to 372, and 383 to 403; these read FCRP…SLVA, SLAF…IHIF, ILGL…TVFI, VLTA…GFFL, LIFC…FKDI, VFWI…LVGA, ILWS…VLWY, and VVLQ…YCLI.

Belongs to the UbiA prenyltransferase family. The cofactor is Mg(2+). Requires Mn(2+) as cofactor.

Its subcellular location is the plastid. The protein resides in the chloroplast membrane. The enzyme catalyses (2S)-naringenin + dimethylallyl diphosphate = sophoraflavanone B + diphosphate. In terms of biological role, involved in the biosynthesis of sophoraflavanone G (SFG). Can use flavanones (naringenin, liquiritigenin and hesperetin) as substrates, but not flavonols or isoflavones. Shows a strict specificity for dimethylallyl diphosphate. This chain is Naringenin 8-dimethylallyltransferase 2, chloroplastic (N8DT-2), found in Sophora flavescens (Shrubby sophora).